Reading from the N-terminus, the 512-residue chain is Monocarboxylate transporter 10 (512 aa).

The segment at 1-44 is disordered; it reads MVPSQEEPAAERETNEAQPPGPAPSDDAPLPGPGPSDVSDVAAE. The Cytoplasmic segment spans residues 1-63; it reads MVPSQEEPAA…AGSEPPVPPE (63 aa). Residues 64–84 form a helical membrane-spanning segment; sequence GGWGWLVMLAAMWCNGSVFGI. Topologically, residues 85-111 are extracellular; it reads QNAYGVLFVSMLDTFKAKDDDNMAFKT. The chain crosses the membrane as a helical span at residues 112–132; the sequence is AWVGSLSMGMIFFCCPIVSVF. The Cytoplasmic segment spans residues 133–141; the sequence is TDMFGCRRT. Residues 142–162 traverse the membrane as a helical segment; it reads AVVGAAVGFIGLMSSSFVSSI. Over 163-168 the chain is Extracellular; that stretch reads EPLYLT. Residues 169 to 189 traverse the membrane as a helical segment; sequence YGIIFACGCSFAYQPSLVILG. The Cytoplasmic portion of the chain corresponds to 190–201; it reads HYFKKRLGLVNG. A helical membrane pass occupies residues 202–222; it reads IVTAGSSVFTILLPLLLGNLI. Residues 223–232 lie on the Extracellular side of the membrane; that stretch reads SSVKLFNTLR. A helical transmembrane segment spans residues 233–253; sequence ILCIFMFVLFLAGFTYRPLVP. Topologically, residues 254 to 291 are cytoplasmic; it reads STKEKESGGSRSSFFSRRKLSPPKKVFNFALFKETTYA. S260 carries the post-translational modification Phosphoserine. A helical transmembrane segment spans residues 292-312; that stretch reads VWAAGIPLALFGYFVPYVHLM. Topologically, residues 313-326 are extracellular; it reads NHVKERFQDVNNKE. Residues 327–347 traverse the membrane as a helical segment; it reads VLFMCIGITSGVGRLLFGRIA. Residues 348–362 are Cytoplasmic-facing; that stretch reads DYLPGVKKVYLQVLS. The helical transmembrane segment at 363 to 383 threads the bilayer; it reads FFFIGLMSMMIPLCSAFGALI. Residue A384 is a topological domain, extracellular. The chain crosses the membrane as a helical span at residues 385-405; the sequence is VCLAMGLFDGCFISIMAPIAF. The Cytoplasmic portion of the chain corresponds to 406–416; that stretch reads ELVGPQDASQA. The helical transmembrane segment at 417–437 threads the bilayer; the sequence is IGFLLGFMSIPMTVGPPIAGL. Over 438–448 the chain is Extracellular; sequence LHDKLGTYDVA. Residues 449–469 traverse the membrane as a helical segment; that stretch reads FYLAGIPPFVGGVVLCLIPWI. Residues 470 to 512 are Cytoplasmic-facing; it reads HSKKQRKISKNAGGEKMEKMLENQSSLLSGSSGIFKKDSASII. A phosphoserine mark is found at S495, S498, S500, and S501.

This sequence belongs to the major facilitator superfamily. Monocarboxylate porter (TC 2.A.1.13) family. In terms of processing, not N-glycosylated. Highly expressed in small intestine, particularly in jejunum and ileum, scarcely in colon and substantially in kidney, liver and skeletal muscle. In the brain expression is low and appears to be restricted to a subset of neurons, microglia cells, and oligodendrocytes.

The protein resides in the cell membrane. It is found in the basolateral cell membrane. The enzyme catalyses L-tryptophan(in) = L-tryptophan(out). It carries out the reaction L-tyrosine(in) = L-tyrosine(out). It catalyses the reaction L-phenylalanine(in) = L-phenylalanine(out). The catalysed reaction is 3,3',5-triiodo-L-thyronine(out) = 3,3',5-triiodo-L-thyronine(in). The enzyme catalyses L-thyroxine(out) = L-thyroxine(in). Its function is as follows. Sodium- and proton-independent thyroid hormones and aromatic acids transporter. Mediates both uptake and efflux of 3,5,3'-triiodothyronine (T3) and 3,5,3',5'-tetraiodothyronine (T4) with high affinity, suggesting a role in the homeostasis of thyroid hormone levels. Responsible for low affinity bidirectional transport of the aromatic amino acids, such as phenylalanine, tyrosine, tryptophan and L-3,4-dihydroxyphenylalanine (L-dopa). Plays an important role in homeostasis of aromatic amino acids. The chain is Monocarboxylate transporter 10 (Slc16a10) from Mus musculus (Mouse).